A 159-amino-acid chain; its full sequence is Anaerobic nitrite reductase HB2 (159 aa).

The Globin domain maps to 2-152 (GFTEKQEGLV…LAEAIKAEMK (151 aa)). The short motif at 35–39 (EIAPG) is the Homodimerization element. Heme b contacts are provided by Ser-45, Lys-59, His-63, and His-98. Residues 105-117 (DPHFEVVKEALLR) carry the Homodimerization motif.

Belongs to the plant globin family. As to quaternary structure, homodimer. Heme b serves as cofactor.

The protein localises to the cytoplasm. It localises to the nucleus. It carries out the reaction Fe(III)-heme b-[protein] + nitric oxide + H2O = Fe(II)-heme b-[protein] + nitrite + 2 H(+). Functionally, phytoglobin that reduces nitrite to nitric oxide (NO) under anoxic conditions (e.g. during flooding or in waterlogged soil). May not function as an oxygen storage or transport protein. Has an unusually high affinity for O(2) through an hexacoordinate heme iron because of a very low dissociation constant. The chain is Anaerobic nitrite reductase HB2 from Gossypium hirsutum (Upland cotton).